Consider the following 533-residue polypeptide: (E)-beta-farnesene synthase (533 aa).

Residues Asp-286 and Asp-290 each contribute to the Mg(2+) site. Asp-286, Asp-290, Arg-427, and Asn-430 together coordinate substrate. The short motif at 286 to 290 is the DDXXD motif element; sequence DDMMD. Positions 430 and 438 each coordinate Mg(2+).

It belongs to the terpene synthase family. In terms of assembly, monomer. Mg(2+) serves as cofactor. It depends on Mn(2+) as a cofactor.

Its subcellular location is the cytoplasm. It catalyses the reaction (2E,6E)-farnesyl diphosphate = (E)-beta-farnesene + diphosphate. The catalysed reaction is (2E,6E)-farnesyl diphosphate = alpha-copaene + diphosphate. The enzyme catalyses (2E,6E)-farnesyl diphosphate = (1S,5S,6R)-alpha-bergamotene + diphosphate. It carries out the reaction (2E,6E)-farnesyl diphosphate = (-)-(E)-beta-caryophyllene + diphosphate. It catalyses the reaction (2E,6E)-farnesyl diphosphate = delta-cadinene + diphosphate. The catalysed reaction is (2E,6E)-farnesyl diphosphate = (+)-germacrene D + diphosphate. The enzyme catalyses (2E,6E)-farnesyl diphosphate = alpha-zingiberene + diphosphate. It carries out the reaction (2E,6E)-farnesyl diphosphate = alpha-muurolene + diphosphate. It catalyses the reaction (2E,6E)-farnesyl diphosphate = (S)-beta-bisabolene + diphosphate. The catalysed reaction is (2E,6E)-farnesyl diphosphate = beta-sesquiphellandrene + diphosphate. The enzyme catalyses (2E,6E)-farnesyl diphosphate = sesquisabinene A + diphosphate. It participates in secondary metabolite biosynthesis; terpenoid biosynthesis. Sesquiterpene cyclase catalyzing mainly the production of beta-farnesene and alpha-bergamotene in equal amounts from farnesyl diphosphate. Also mediates the biosynthesis of minor sesquiterpene hydrocarbons including alpha-muurolene, beta-bisabolene, zingiberene, sesquiphellandrene, sesquisabinene A, germacrene D, delta-cadinene, alpha-copaene and (E)-beta-caryophyllene. Involved in indirect defense by producing volatile signals attracting natural enemies of herbivores. The protein is (E)-beta-farnesene synthase of Zea mays (Maize).